The chain runs to 693 residues: Cyclin-dependent kinase G-1 (693 aa).

Positions 1–10 (MAAGSHGGYR) are enriched in gly residues. Disordered stretches follow at residues 1 to 148 (MAAG…ARDP) and 236 to 308 (KKKK…DDYP). Positions 13–24 (EVAREREHDVGV) are enriched in basic and acidic residues. Positions 26 to 39 (RRSKEHYHHRHPSR) are enriched in basic residues. Composition is skewed to basic and acidic residues over residues 40–54 (HRDS…RSGG), 75–87 (RPSE…REPG), and 97–122 (RSGE…EEAK). A compositionally biased stretch (low complexity) spans 268–284 (SVRSSSRSSDSGVLQGS). The segment covering 287–304 (RDLEVEKGDNIDVEKAAD) has biased composition (basic and acidic residues). The Protein kinase domain occupies 349-640 (FERLNTINEG…AEDALNHEWF (292 aa)). ATP is bound by residues 355-363 (INEGTYGVV) and lysine 378. A Phosphothreonine modification is found at threonine 359. Phosphotyrosine is present on tyrosine 360. Aspartate 473 serves as the catalytic Proton acceptor. Serine 500 carries the phosphoserine modification. Threonine 506 carries the post-translational modification Phosphothreonine. The tract at residues 664-693 (RFKKHMKSPDPLEEQWMKEQGNNGDRGLFG) is disordered.

Belongs to the protein kinase superfamily. CMGC Ser/Thr protein kinase family. CDC2/CDKX subfamily.

The catalysed reaction is L-seryl-[protein] + ATP = O-phospho-L-seryl-[protein] + ADP + H(+). The enzyme catalyses L-threonyl-[protein] + ATP = O-phospho-L-threonyl-[protein] + ADP + H(+). It carries out the reaction [DNA-directed RNA polymerase] + ATP = phospho-[DNA-directed RNA polymerase] + ADP + H(+). This chain is Cyclin-dependent kinase G-1 (CDKG-1), found in Oryza sativa subsp. indica (Rice).